Reading from the N-terminus, the 361-residue chain is Hydroxyproline O-arabinosyltransferase PLENTY (361 aa).

The chain crosses the membrane as a helical; Signal-anchor span at residues 13 to 33 (LLMLLMVLGFFFATYNLVSMI).

Its subcellular location is the golgi apparatus membrane. The enzyme catalyses trans-4-hydroxy-L-prolyl-[protein] + UDP-beta-L-arabinofuranose = O-(beta-L-arabinofuranosyl)-trans-4-hydroxy-L-prolyl-[protein] + UDP + H(+). In terms of biological role, glycosyltransferase involved in the O-arabinosylation of several proteins including extensins and small signaling peptides. Catalyzes the transfer of the initial L-arabinose to the hydroxyl group of Hyp residues. Probably involved in the arabinosylation of CLAVATA3/ESR-related (CLE) signaling peptides that move from root to shoot, to interact with receptor kinase signaling that regulates nodulation. Involved in long distance nodulation signaling events. Involved in the autoregulation of nodulation (AON), a long distance systemic signaling from root to shoot and back again, which allows legumes to limit the number of root nodules formed based on available nitrogen and previous rhizobial colonization. The polypeptide is Hydroxyproline O-arabinosyltransferase PLENTY (Lotus japonicus (Lotus corniculatus var. japonicus)).